Here is a 116-residue protein sequence, read N- to C-terminus: G antigen 2B/2C (116 aa).

A disordered region spans residues 1–116; the sequence is MSWRGRSTYR…PEEGEKQSQC (116 aa). 2 stretches are compositionally biased toward acidic residues: residues 31-44 and 86-95; these read FSDE…EEGE and ECEDGPDGQE. Residues 102-116 show a composition bias toward basic and acidic residues; that stretch reads EEVKTPEEGEKQSQC.

Belongs to the GAGE family. Expressed in a variety of tumor tissues but not in normal tissues, except testis.

Antigen, recognized on melanoma by autologous cytolytic T-lymphocytes. This Homo sapiens (Human) protein is G antigen 2B/2C (GAGE2B).